The chain runs to 383 residues: Putative dehydratase subunit YjiM (383 aa).

This sequence belongs to the FldB/FldC dehydratase alpha/beta subunit family.

This chain is Putative dehydratase subunit YjiM (yjiM), found in Escherichia coli (strain K12).